The sequence spans 260 residues: Alpha carbonic anhydrase 6 (260 aa).

The N-terminal stretch at 1 to 28 is a signal peptide; that stretch reads MDANTKTILFFVVFFIDLFSPNILFVYA. The 226-residue stretch at 35–260 folds into the Alpha-carbonic anhydrase domain; sequence PLFTYKQKTE…FVFVFWCMLM (226 aa). Cysteines 60 and 215 form a disulfide. His100 (proton acceptor) is an active-site residue. Residues His126 and His128 each contribute to the Zn(2+) site. The N-linked (GlcNAc...) asparagine glycan is linked to Asn136. His145 contacts Zn(2+). 211-212 provides a ligand contact to substrate; that stretch reads TI.

The protein belongs to the alpha-class carbonic anhydrase family. The cofactor is Zn(2+). Post-translationally, N-glycosylated.

The protein resides in the plastid. The protein localises to the chloroplast stroma. It carries out the reaction hydrogencarbonate + H(+) = CO2 + H2O. Reversible hydration of carbon dioxide. The sequence is that of Alpha carbonic anhydrase 6 (ACA6) from Arabidopsis thaliana (Mouse-ear cress).